Consider the following 388-residue polypeptide: Acetate kinase (388 aa).

Asn-14 provides a ligand contact to Mg(2+). Lys-21 contributes to the ATP binding site. Position 80 (Arg-80) interacts with substrate. Asp-137 functions as the Proton donor/acceptor in the catalytic mechanism. ATP-binding positions include 197–201 (HLGNG), 271–273 (DFR), and 319–323 (GIGEH). Glu-373 lines the Mg(2+) pocket.

The protein belongs to the acetokinase family. In terms of assembly, homodimer. It depends on Mg(2+) as a cofactor. Mn(2+) is required as a cofactor.

The protein resides in the cytoplasm. It carries out the reaction acetate + ATP = acetyl phosphate + ADP. The protein operates within metabolic intermediate biosynthesis; acetyl-CoA biosynthesis; acetyl-CoA from acetate: step 1/2. Functionally, catalyzes the formation of acetyl phosphate from acetate and ATP. Can also catalyze the reverse reaction. This chain is Acetate kinase, found in Mycobacterium marinum (strain ATCC BAA-535 / M).